Reading from the N-terminus, the 35-residue chain is Thrombin-like enzyme cerastobin (35 aa).

The Peptidase S1 domain maps to 1–35 (VIGGAKCNINEHRSIVLLYSSRLFGHTLINKEWVL).

It belongs to the peptidase S1 family. Snake venom subfamily. In terms of assembly, monomer. Expressed by the venom gland.

It localises to the secreted. Inhibited by diisopropylfluorophosphate (DFP). Thrombin-like snake venom serine protease, that cleaves both alpha-chain (FGA) and beta-chain (FGB) of fibrinogen. Partially degrades factor X (F10), and release bradykinin from kininogen (KNG). Potently induces platelet aggregation. Shows a proteolytic activity towards protein constituents of the platelets cytoskeleton. Hydrolyzes actin, actin-binding protein, and P235. Shows a preferential cleavage at Arg-|-Xaa bonds. This chain is Thrombin-like enzyme cerastobin, found in Cerastes vipera (Sahara sand viper).